The primary structure comprises 302 residues: Pyridoxal 5'-phosphate synthase subunit PdxS (302 aa).

Aspartate 32 is a D-ribose 5-phosphate binding site. Lysine 89 functions as the Schiff-base intermediate with D-ribose 5-phosphate in the catalytic mechanism. A D-ribose 5-phosphate-binding site is contributed by glycine 161. Position 173 (arginine 173) interacts with D-glyceraldehyde 3-phosphate. Residues glycine 222 and 243 to 244 (GS) contribute to the D-ribose 5-phosphate site. The interval 278 to 302 (GIGKGMKGQSNEDLPDEEKLQGRGV) is disordered.

It belongs to the PdxS/SNZ family. In terms of assembly, in the presence of PdxT, forms a dodecamer of heterodimers.

The catalysed reaction is aldehydo-D-ribose 5-phosphate + D-glyceraldehyde 3-phosphate + L-glutamine = pyridoxal 5'-phosphate + L-glutamate + phosphate + 3 H2O + H(+). Its pathway is cofactor biosynthesis; pyridoxal 5'-phosphate biosynthesis. Functionally, catalyzes the formation of pyridoxal 5'-phosphate from ribose 5-phosphate (RBP), glyceraldehyde 3-phosphate (G3P) and ammonia. The ammonia is provided by the PdxT subunit. Can also use ribulose 5-phosphate and dihydroxyacetone phosphate as substrates, resulting from enzyme-catalyzed isomerization of RBP and G3P, respectively. The sequence is that of Pyridoxal 5'-phosphate synthase subunit PdxS from Halorubrum lacusprofundi (strain ATCC 49239 / DSM 5036 / JCM 8891 / ACAM 34).